A 362-amino-acid chain; its full sequence is Anthranilate phosphoribosyltransferase (362 aa).

5-phospho-alpha-D-ribose 1-diphosphate contacts are provided by residues Gly-96, 99–100 (GD), Thr-104, 106–109 (NIST), 124–132 (KHGNRAASS), and Gly-136. Residue Gly-96 coordinates anthranilate. A Mg(2+)-binding site is contributed by Ser-108. Asn-127 contributes to the anthranilate binding site. Arg-182 contributes to the anthranilate binding site. Mg(2+) contacts are provided by Asp-240 and Glu-241.

This sequence belongs to the anthranilate phosphoribosyltransferase family. In terms of assembly, homodimer. Mg(2+) serves as cofactor.

The enzyme catalyses N-(5-phospho-beta-D-ribosyl)anthranilate + diphosphate = 5-phospho-alpha-D-ribose 1-diphosphate + anthranilate. Its pathway is amino-acid biosynthesis; L-tryptophan biosynthesis; L-tryptophan from chorismate: step 2/5. In terms of biological role, catalyzes the transfer of the phosphoribosyl group of 5-phosphorylribose-1-pyrophosphate (PRPP) to anthranilate to yield N-(5'-phosphoribosyl)-anthranilate (PRA). This is Anthranilate phosphoribosyltransferase from Rhodococcus jostii (strain RHA1).